A 129-amino-acid polypeptide reads, in one-letter code: Thyroid hormone receptor alpha (129 aa).

The NR LBD domain occupies 26-129 (AEWELIRMVT…EIMSLRAAVR (104 aa)). Residue Arg-91 participates in 3,3',5-triiodo-L-thyronine binding.

Belongs to the nuclear hormone receptor family. NR1 subfamily.

Its subcellular location is the nucleus. Functionally, nuclear hormone receptor that can act as a repressor or activator of transcription. High affinity receptor for thyroid hormones, including triiodothyronine and thyroxine. The sequence is that of Thyroid hormone receptor alpha (thra1) from Sparus aurata (Gilthead sea bream).